Consider the following 124-residue polypeptide: Holo-[acyl-carrier-protein] synthase (124 aa).

2 residues coordinate Mg(2+): Asp-7 and Glu-55.

It belongs to the P-Pant transferase superfamily. AcpS family. Mg(2+) is required as a cofactor.

It is found in the cytoplasm. The enzyme catalyses apo-[ACP] + CoA = holo-[ACP] + adenosine 3',5'-bisphosphate + H(+). Transfers the 4'-phosphopantetheine moiety from coenzyme A to a Ser of acyl-carrier-protein. This Borreliella burgdorferi (strain ATCC 35210 / DSM 4680 / CIP 102532 / B31) (Borrelia burgdorferi) protein is Holo-[acyl-carrier-protein] synthase.